Here is a 594-residue protein sequence, read N- to C-terminus: Aspartate--tRNA(Asp/Asn) ligase (594 aa).

Position 175 (glutamate 175) interacts with L-aspartate. The tract at residues 199 to 202 (QLFK) is aspartate. Arginine 221 lines the L-aspartate pocket. ATP-binding positions include 221 to 223 (RDE) and glutamine 230. An L-aspartate-binding site is contributed by histidine 446. Glutamate 492 lines the ATP pocket. Arginine 499 provides a ligand contact to L-aspartate. An ATP-binding site is contributed by 544-547 (GFDR).

The protein belongs to the class-II aminoacyl-tRNA synthetase family. Type 1 subfamily. As to quaternary structure, homodimer.

The protein resides in the cytoplasm. It carries out the reaction tRNA(Asx) + L-aspartate + ATP = L-aspartyl-tRNA(Asx) + AMP + diphosphate. Functionally, aspartyl-tRNA synthetase with relaxed tRNA specificity since it is able to aspartylate not only its cognate tRNA(Asp) but also tRNA(Asn). Reaction proceeds in two steps: L-aspartate is first activated by ATP to form Asp-AMP and then transferred to the acceptor end of tRNA(Asp/Asn). The polypeptide is Aspartate--tRNA(Asp/Asn) ligase (Hydrogenobaculum sp. (strain Y04AAS1)).